A 270-amino-acid chain; its full sequence is Formamidopyrimidine-DNA glycosylase (270 aa).

Residue P2 is the Schiff-base intermediate with DNA of the active site. Residue E3 is the Proton donor of the active site. The active-site Proton donor; for beta-elimination activity is the K58. DNA contacts are provided by H91, R110, and R151. The segment at 236–270 (FVYGRGGEFCKSCGSTLREIRLGQRASVYCSRCQR) adopts an FPG-type zinc-finger fold. The active-site Proton donor; for delta-elimination activity is R260.

This sequence belongs to the FPG family. Monomer. It depends on Zn(2+) as a cofactor.

The catalysed reaction is Hydrolysis of DNA containing ring-opened 7-methylguanine residues, releasing 2,6-diamino-4-hydroxy-5-(N-methyl)formamidopyrimidine.. The enzyme catalyses 2'-deoxyribonucleotide-(2'-deoxyribose 5'-phosphate)-2'-deoxyribonucleotide-DNA = a 3'-end 2'-deoxyribonucleotide-(2,3-dehydro-2,3-deoxyribose 5'-phosphate)-DNA + a 5'-end 5'-phospho-2'-deoxyribonucleoside-DNA + H(+). Functionally, involved in base excision repair of DNA damaged by oxidation or by mutagenic agents. Acts as a DNA glycosylase that recognizes and removes damaged bases. Has a preference for oxidized purines, such as 7,8-dihydro-8-oxoguanine (8-oxoG). Has AP (apurinic/apyrimidinic) lyase activity and introduces nicks in the DNA strand. Cleaves the DNA backbone by beta-delta elimination to generate a single-strand break at the site of the removed base with both 3'- and 5'-phosphates. The protein is Formamidopyrimidine-DNA glycosylase of Stutzerimonas stutzeri (strain A1501) (Pseudomonas stutzeri).